The following is a 445-amino-acid chain: Phosphoglucosamine mutase (445 aa).

The active-site Phosphoserine intermediate is the S99. Mg(2+) is bound by residues S99, D242, D244, and D246. Phosphoserine is present on S99.

Belongs to the phosphohexose mutase family. Requires Mg(2+) as cofactor. Post-translationally, activated by phosphorylation.

The catalysed reaction is alpha-D-glucosamine 1-phosphate = D-glucosamine 6-phosphate. Functionally, catalyzes the conversion of glucosamine-6-phosphate to glucosamine-1-phosphate. This is Phosphoglucosamine mutase from Campylobacter jejuni subsp. jejuni serotype O:6 (strain 81116 / NCTC 11828).